We begin with the raw amino-acid sequence, 148 residues long: uncharacterized protein (148 aa).

The next 3 membrane-spanning stretches (helical) occupy residues 25 to 45 (FCTV…LLTA), 85 to 105 (IVRF…LLYL), and 118 to 138 (LAAT…WVFG).

This sequence belongs to the GtrA family.

The protein resides in the cell membrane. This is an uncharacterized protein from Bacillus subtilis (strain 168).